The following is a 256-amino-acid chain: POU domain class 2-associating factor 1 (256 aa).

Positions 1–23 are disordered; sequence MLWQKPTAPEQAPAPARPYQGVR. The OCA domain occupies 16–38; sequence ARPYQGVRVKEPVKELLRRKRGH.

It belongs to the POU2AF family. As to quaternary structure, interacts with POU2F1/OCT1 and POU2F2/OCT2; the interaction increases POU2F1 and POU2F2 transactivation activity. In terms of processing, ubiquitinated; mediated by SIAH1 or SIAH2 and leading to its subsequent proteasomal degradation. B-cell specific. Detected in mainly in spleen, but also in thymus, periphral blood leukocyte and small intestine.

Its subcellular location is the nucleus. In terms of biological role, transcriptional coactivator that specifically associates with either POU2F1/OCT1 or POU2F2/OCT2. It boosts the POU2F1/OCT1 mediated promoter activity and to a lesser extent, that of POU2F2/OCT2. It recognizes the POU domains of POU2F1/OCT1 and POU2F2/OCT2. It is essential for the response of B-cells to antigens and required for the formation of germinal centers. Regulates IL6 expression in B cells as POU2F2/OCT2 coactivator. The protein is POU domain class 2-associating factor 1 of Homo sapiens (Human).